Here is a 317-residue protein sequence, read N- to C-terminus: Methyltransferase CPUR_05424 (317 aa).

A methyltransferase domain region spans residues D57–C149.

It belongs to the methyltransferase superfamily.

It functions in the pathway pigment biosynthesis. In terms of biological role, methyltransferase; part of the ergochrome gene cluster responsible for the typical purple-black color of the ergot sclerotia. The ergochrome gene cluster produces several ergot pigments including the yellow ergochrome secalonic acid and its derivatives, as well as the red anthraquinones endocrocin and clavorubin. The pathway begins with the synthesis of atrochrysone thioester by the polyketide synthase (PKS) CPUR_05437. The atrochrysone carboxyl ACP thioesterase CPUR_05436 then breaks the thioester bond and releases the atrochrysone carboxylic acid from CPUR_05437. The atrochrysone carboxylic acid is then converted to atrochrysone which is further transformed into emodin anthrone. The next step is performed by the anthrone oxygenase CPUR_05434 that catalyzes the oxidation of emodinanthrone to emodin. Emodin is further modified to yield monodictyphenone via several steps involving CPUR_05427, CPUR_05428, CPUR_05429 and CPUR_05430. The short chain dehydrogenase/reductase CPUR_05418 then catalyzes the C-5 ketoreduction to give the xanthone skeleton of the monomeric units. Ergochromes formation requires further dimerization steps of different xanthone units, probably catalyzed by the cytochrome P450 monooxygenase CPUR_05419. CPUR_05425, CPUR_05426 and CPUR_05431 are unique to Claviceps, thus it is likely that they are involved in further modification of xanthone units or in their dimerization. The yellow ergochromes and the red anthraquinone pigments endocrocin and clavorubin are products from the same PKS derived precursors and the latter are likely shunt products in the pathway of xanthone biosynthesis. It is proposed that atrochrysone carboxylic acid released from the PKS CPUR_05437 can also be converted to endocrocin anthrone which is further oxidized into endocrocin by CPUR_05435. Endocrocin could be then modified to clavorubin, possibly by CPUR_05423 and CPUR_05431. Clavorubin is the principal anthraquinone metabolite produced by the cluster with a much higher yield compared to endocrocin. The chain is Methyltransferase CPUR_05424 from Claviceps purpurea (strain 20.1) (Ergot fungus).